Consider the following 374-residue polypeptide: Tomoregulin-2 (374 aa).

An N-terminal signal peptide occupies residues 1–40 (MVLWESPRQCSSWTLCEGFCWLLLLPVMLLIVARPVKLAA). At 41-320 (FPTSLSDCQT…VPGPVRFQYV (280 aa)) the chain is on the extracellular side. 2 consecutive Kazal-like domains span residues 90-137 (VCQF…SCAT) and 181-229 (VCNI…RCQD). 6 cysteine pairs are disulfide-bonded: Cys91-Cys121, Cys95-Cys114, Cys103-Cys135, Cys182-Cys213, Cys186-Cys206, and Cys195-Cys227. N-linked (GlcNAc...) (complex) asparagine; atypical glycosylation occurs at Asn204. Asn230 is a glycosylation site (N-linked (GlcNAc...) asparagine). The EGF-like domain maps to 261 to 301 (HHIPCPEHYNGFCMHGKCEHSINMQEPSCRCDAGYTGQHCE). Cystine bridges form between Cys265/Cys278, Cys273/Cys289, and Cys291/Cys300. The interval 303–320 (KDYSVLYVVPGPVRFQYV) is required for shedding. A helical transmembrane segment spans residues 321–341 (LIAAVIGTIQIAVICVVVLCI). Residues 342–374 (TRKCPRSNRIHRQKQNTGHYSSDNTTRASTRLI) lie on the Cytoplasmic side of the membrane. The disordered stretch occupies residues 353–374 (RQKQNTGHYSSDNTTRASTRLI). The segment covering 356-374 (QNTGHYSSDNTTRASTRLI) has biased composition (polar residues).

This sequence belongs to the tomoregulin family. Post-translationally, O-glycosylated; contains chondroitin sulfate glycosaminoglycans. In terms of processing, a soluble form (TMEFF2-ECD) is produced by proteolytic shedding. This shedding can be induced by phorbol ester or pro-inflammatory cytokines such as TNFalpha, and is mediated by ADAM17. In terms of tissue distribution, highly expressed in adult and fetal brain, spinal cord and prostate. Expressed in all brain regions except the pituitary gland, with highest levels in amygdala and corpus callosum. Expressed in the pericryptal myofibroblasts and other stromal cells of normal colonic mucosa. Expressed in prostate carcinoma. Down-regulated in colorectal cancer. Present in Alzheimer disease plaques (at protein level). Isoform 3 is expressed weakly in testis and at high levels in normal and cancerous prostate.

It localises to the membrane. It is found in the secreted. May be a survival factor for hippocampal and mesencephalic neurons. The shedded form up-regulates cancer cell proliferation, probably by promoting ERK1/2 phosphorylation. This chain is Tomoregulin-2 (TMEFF2), found in Homo sapiens (Human).